A 1129-amino-acid polypeptide reads, in one-letter code: SMC5-SMC6 complex localization factor protein 2 (1129 aa).

Disordered regions lie at residues Val-71–Asn-178, Asn-312–Ala-343, and Met-955–Gly-1057. Basic residues predominate over residues Lys-72 to Pro-87. Residues Leu-93 to Pro-110 are compositionally biased toward polar residues. Basic and acidic residues-rich tracts occupy residues Gln-112 to Leu-130 and Arg-149 to Val-166. 2 stretches are compositionally biased toward polar residues: residues Gln-169 to Asn-178 and Thr-324 to Ala-343. Composition is skewed to acidic residues over residues Glu-999 to Trp-1014 and Ser-1033 to Ser-1048.

The protein belongs to the FAM178 family.

It localises to the nucleus. Plays a role in the DNA damage response (DDR) pathway by regulating postreplication repair of UV-damaged DNA and genomic stability maintenance. Promotes the recruitment of the SMC5-SMC6 complex to DNA lesions. In Danio rerio (Zebrafish), this protein is SMC5-SMC6 complex localization factor protein 2 (slf2).